A 513-amino-acid polypeptide reads, in one-letter code: Glutamyl-tRNA(Gln) amidotransferase subunit A (513 aa).

Active-site charge relay system residues include K85 and S160. Catalysis depends on S184, which acts as the Acyl-ester intermediate.

It belongs to the amidase family. GatA subfamily. In terms of assembly, heterotrimer of A, B and C subunits.

The enzyme catalyses L-glutamyl-tRNA(Gln) + L-glutamine + ATP + H2O = L-glutaminyl-tRNA(Gln) + L-glutamate + ADP + phosphate + H(+). Its function is as follows. Allows the formation of correctly charged Gln-tRNA(Gln) through the transamidation of misacylated Glu-tRNA(Gln) in organisms which lack glutaminyl-tRNA synthetase. The reaction takes place in the presence of glutamine and ATP through an activated gamma-phospho-Glu-tRNA(Gln). The protein is Glutamyl-tRNA(Gln) amidotransferase subunit A of Bifidobacterium longum subsp. infantis (strain ATCC 15697 / DSM 20088 / JCM 1222 / NCTC 11817 / S12).